The chain runs to 76 residues: uncharacterized protein (76 aa).

The protein to K.pneumoniae LtrA, E.coli YjiE, and YhcS.

This is an uncharacterized protein from Escherichia coli O6:H1 (strain CFT073 / ATCC 700928 / UPEC).